The chain runs to 424 residues: Protein TUNICAMYCIN INDUCED 1 (424 aa).

An N-terminal signal peptide occupies residues 1-25 (MGHRVLVYVGALFLILFTIFPSSSA). 3 N-linked (GlcNAc...) asparagine glycosylation sites follow: Asn197, Asn296, and Asn406.

Restricted to pollen grains at high levels.

It localises to the endoplasmic reticulum. Its function is as follows. Involved in the regulation of pollen surface morphology, probably by modulating the secretion of proteins and/or lipids during pollen development. The protein is Protein TUNICAMYCIN INDUCED 1 of Arabidopsis thaliana (Mouse-ear cress).